The sequence spans 349 residues: Selenide, water dikinase (349 aa).

Cys17 is a catalytic residue. ATP contacts are provided by residues Lys20 and 48–50; that span reads MAD. Residue Asp51 participates in Mg(2+) binding. ATP contacts are provided by residues Asp68, Asp91, and 139-141; that span reads GHS. Asp91 contacts Mg(2+). Asp227 lines the Mg(2+) pocket.

It belongs to the selenophosphate synthase 1 family. Class I subfamily. Homodimer. The cofactor is Mg(2+).

It carries out the reaction hydrogenselenide + ATP + H2O = selenophosphate + AMP + phosphate + 2 H(+). Its function is as follows. Synthesizes selenophosphate from selenide and ATP. The polypeptide is Selenide, water dikinase (Rhizobium meliloti (strain 1021) (Ensifer meliloti)).